The chain runs to 512 residues: Capsid scaffolding protein (512 aa).

Active-site charge relay system residues include His-47, Ser-115, and His-131. An interaction with pAP region spans residues 264-282 (DLISTICSTTHTTHHDLVR). The tract at residues 376–407 (RGSQKRCAPTDSDDEMSFPGDPDYTTKKKKRY) is disordered. A Nuclear localization signal motif is present at residues 402-408 (KKKKRYR). An interaction with major capsid protein region spans residues 492-512 (DQSLLSLNKKLFVEALNKMDN).

The protein belongs to the herpesviridae capsid scaffolding protein family. In terms of assembly, homomultimer. Interacts with major capsid protein. As to quaternary structure, exists in a monomer-dimer equilibrium with the dimer being the active species. In terms of processing, capsid scaffolding protein is cleaved by assemblin after formation of the spherical procapsid. As a result, the capsid obtains its mature, icosahedral shape. Cleavages occur at two or more sites: release (R-site) and maturation (M-site).

It localises to the host cytoplasm. Its subcellular location is the host nucleus. The catalysed reaction is Cleaves -Ala-|-Ser- and -Ala-|-Ala- bonds in the scaffold protein.. Its function is as follows. Acts as a scaffold protein by binding major capsid protein in the cytoplasm, inducing the nuclear localization of both proteins. Multimerizes in the nucleus such as major capsid protein forms the icosahedral T=16 capsid. Autocatalytic cleavage releases the assembly protein, and subsequently abolishes interaction with major capsid protein. Cleavages products are evicted from the capsid before or during DNA packaging. Protease that plays an essential role in virion assembly within the nucleus. Catalyzes the cleavage of the assembly protein after formation of the spherical procapsid. By that cleavage, the capsid matures and gains its icosahedral shape. The cleavage sites seem to include -Ala-Ser-, -Ala-Ala-, as well as Ala-Thr bonds. Assemblin and cleavages products are evicted from the capsid before or during DNA packaging. In terms of biological role, plays a major role in capsid assembly. Acts as a scaffold protein by binding major capsid protein. Multimerizes in the nucleus such as major capsid protein forms the icosahedral T=16 capsid. Cleaved by assemblin after capsid completion. The cleavages products are evicted from the capsid before or during DNA packaging. The protein is Capsid scaffolding protein (U53) of Human herpesvirus 7 (strain JI) (HHV-7).